Reading from the N-terminus, the 158-residue chain is Phosphopantetheine adenylyltransferase (158 aa).

Residue Thr10 coordinates substrate. ATP is bound by residues 10–11 and His18; that span reads TF. 3 residues coordinate substrate: Lys42, Leu74, and Arg88. ATP-binding positions include 89–91, Glu99, and 124–130; these read GIR and WRYLSST.

This sequence belongs to the bacterial CoaD family. As to quaternary structure, homohexamer. Mg(2+) serves as cofactor.

Its subcellular location is the cytoplasm. The enzyme catalyses (R)-4'-phosphopantetheine + ATP + H(+) = 3'-dephospho-CoA + diphosphate. Its pathway is cofactor biosynthesis; coenzyme A biosynthesis; CoA from (R)-pantothenate: step 4/5. In terms of biological role, reversibly transfers an adenylyl group from ATP to 4'-phosphopantetheine, yielding dephospho-CoA (dPCoA) and pyrophosphate. The sequence is that of Phosphopantetheine adenylyltransferase from Actinobacillus pleuropneumoniae serotype 7 (strain AP76).